Reading from the N-terminus, the 264-residue chain is Tryptophan synthase alpha chain (264 aa).

Active-site proton acceptor residues include Glu-44 and Asp-55.

The protein belongs to the TrpA family. As to quaternary structure, tetramer of two alpha and two beta chains.

It catalyses the reaction (1S,2R)-1-C-(indol-3-yl)glycerol 3-phosphate + L-serine = D-glyceraldehyde 3-phosphate + L-tryptophan + H2O. The protein operates within amino-acid biosynthesis; L-tryptophan biosynthesis; L-tryptophan from chorismate: step 5/5. In terms of biological role, the alpha subunit is responsible for the aldol cleavage of indoleglycerol phosphate to indole and glyceraldehyde 3-phosphate. The polypeptide is Tryptophan synthase alpha chain (Lactiplantibacillus plantarum (strain ATCC BAA-793 / NCIMB 8826 / WCFS1) (Lactobacillus plantarum)).